The sequence spans 561 residues: Centromere protein T (561 aa).

Positions 1 to 83 (MADHNPDSDS…HIQASGHLEE (83 aa)) are disordered. Residues 18–27 (RVLDTADPRT) show a composition bias toward basic and acidic residues. Over residues 34–46 (ARAGARRALLETA) the composition is skewed to low complexity. Serine 47 bears the Phosphoserine mark. Threonine 85 is modified (phosphothreonine). The segment at 93 to 421 (ILLTAPESSI…RHHQFLEPAP (329 aa)) is flexible stalk domain. Disordered stretches follow at residues 256-292 (HSLP…PGKP) and 333-457 (AEKK…DPHK). Residues 276–288 (KTQSSGPGLQKNS) are compositionally biased toward polar residues. Residues serine 343, serine 345, and serine 356 each carry the phosphoserine modification. Positions 357–367 (RVEEAEGHTEV) are enriched in basic and acidic residues. Serine 373, serine 385, serine 386, and serine 397 each carry phosphoserine. The span at 395 to 407 (AASPESASSTPES) shows a compositional bias: low complexity.

The protein belongs to the CENP-T/CNN1 family. Component of the CENPA-CAD complex, composed of CENPI, CENPK, CENPL, CENPO, CENPP, CENPQ, CENPR and CENPS. The CENPA-CAD complex is probably recruited on centromeres by the CENPA-NAC complex, at least composed of CENPA, CENPC, CENPH, CENPM, CENPN, CENPT and CENPU. Identified in a centromeric complex containing histones H2A, H2B, H3 and H4, and at least CENPA, CENPB, CENPC, CENPT, CENPN, HJURP, SUPT16H, SSRP1 and RSF1. Interacts (via N-terminus) with the NDC80 complex. Heterodimer with CENPW; this dimer coassembles with CENPS-CENPX heterodimers at centromeres to form the tetrameric CENP-T-W-S-X complex. In terms of processing, dynamically phosphorylated at Ser-47 and probably also other sites during the cell cycle. Phosphorylated at Ser-47 during G2 phase, metaphase and anaphase, but not during telophase or G1 phase.

It is found in the nucleus. The protein localises to the chromosome. Its subcellular location is the centromere. It localises to the kinetochore. In terms of biological role, component of the CENPA-NAC (nucleosome-associated) complex, a complex that plays a central role in assembly of kinetochore proteins, mitotic progression and chromosome segregation. The CENPA-NAC complex recruits the CENPA-CAD (nucleosome distal) complex and may be involved in incorporation of newly synthesized CENPA into centromeres. Part of a nucleosome-associated complex that binds specifically to histone H3-containing nucleosomes at the centromere, as opposed to nucleosomes containing CENPA. Component of the heterotetrameric CENP-T-W-S-X complex that binds and supercoils DNA, and plays an important role in kinetochore assembly. CENPT has a fundamental role in kinetochore assembly and function. It is one of the inner kinetochore proteins, with most further proteins binding downstream. Required for normal chromosome organization and normal progress through mitosis. This chain is Centromere protein T (CENPT), found in Homo sapiens (Human).